Reading from the N-terminus, the 92-residue chain is Small ribosomal subunit protein uS19 (92 aa).

This sequence belongs to the universal ribosomal protein uS19 family.

Functionally, protein S19 forms a complex with S13 that binds strongly to the 16S ribosomal RNA. This is Small ribosomal subunit protein uS19 from Azorhizobium caulinodans (strain ATCC 43989 / DSM 5975 / JCM 20966 / LMG 6465 / NBRC 14845 / NCIMB 13405 / ORS 571).